Reading from the N-terminus, the 192-residue chain is Elongation factor P (192 aa).

Position 37 is an N6-(3,6-diaminohexanoyl)-5-hydroxylysine (Lys37).

Belongs to the elongation factor P family. Post-translationally, may be beta-lysylated on the epsilon-amino group of Lys-37 by the combined action of EpmA and EpmB, and then hydroxylated on the C5 position of the same residue by EpmC (if this protein is present). Lysylation is critical for the stimulatory effect of EF-P on peptide-bond formation. The lysylation moiety may extend toward the peptidyltransferase center and stabilize the terminal 3-CCA end of the tRNA. Hydroxylation of the C5 position on Lys-37 may allow additional potential stabilizing hydrogen-bond interactions with the P-tRNA.

The protein localises to the cytoplasm. It functions in the pathway protein biosynthesis; polypeptide chain elongation. Its function is as follows. Involved in peptide bond synthesis. Alleviates ribosome stalling that occurs when 3 or more consecutive Pro residues or the sequence PPG is present in a protein, possibly by augmenting the peptidyl transferase activity of the ribosome. Modification of Lys-37 is required for alleviation. The polypeptide is Elongation factor P (Acinetobacter baylyi (strain ATCC 33305 / BD413 / ADP1)).